Consider the following 273-residue polypeptide: Zinc finger protein 80 (273 aa).

The segment at Y49–H71 adopts a C2H2-type 1 zinc-finger fold. Residues Y77 to H99 form a C2H2-type 2; degenerate zinc finger. The C2H2-type 3; atypical zinc-finger motif lies at C105–H127. C2H2-type zinc fingers lie at residues Y133 to H155, F161 to H183, K187 to H211, and Y217 to H239.

The protein belongs to the krueppel C2H2-type zinc-finger protein family.

The protein resides in the nucleus. Functionally, may be involved in transcriptional regulation. The polypeptide is Zinc finger protein 80 (ZNF80) (Pan troglodytes (Chimpanzee)).